The following is a 61-amino-acid chain: Conotoxin Cal14.6 (61 aa).

Residues 1–21 form the signal peptide; it reads MKFLLFLSVALLLTSFIETEA. A propeptide spanning residues 22 to 38 is cleaved from the precursor; it reads GPVNEAGVERLFRALVG. At Pro57 the chain carries 4-hydroxyproline; partial. Pro60 carries the proline amide modification.

In terms of processing, contains 2 disulfide bonds. As to expression, expressed by the venom duct.

The protein localises to the secreted. Functionally, probable neurotoxin with unknown target. Possibly targets ion channels. This chain is Conotoxin Cal14.6, found in Californiconus californicus (California cone).